The chain runs to 284 residues: Bifunctional protein FolD (284 aa).

NADP(+)-binding positions include 165-167 (GRS), Ser-190, and Val-231.

This sequence belongs to the tetrahydrofolate dehydrogenase/cyclohydrolase family. In terms of assembly, homodimer.

It catalyses the reaction (6R)-5,10-methylene-5,6,7,8-tetrahydrofolate + NADP(+) = (6R)-5,10-methenyltetrahydrofolate + NADPH. It carries out the reaction (6R)-5,10-methenyltetrahydrofolate + H2O = (6R)-10-formyltetrahydrofolate + H(+). Its pathway is one-carbon metabolism; tetrahydrofolate interconversion. In terms of biological role, catalyzes the oxidation of 5,10-methylenetetrahydrofolate to 5,10-methenyltetrahydrofolate and then the hydrolysis of 5,10-methenyltetrahydrofolate to 10-formyltetrahydrofolate. The protein is Bifunctional protein FolD of Natranaerobius thermophilus (strain ATCC BAA-1301 / DSM 18059 / JW/NM-WN-LF).